The sequence spans 172 residues: Diphosphoinositol polyphosphate phosphohydrolase 1 (172 aa).

N-acetylmethionine is present on Met-1. Substrate contacts are provided by residues Arg-10, 18–20, and 39–41; these read KKR and SSR. One can recognise a Nudix hydrolase domain in the interval 17–144; it reads YKKRAACLCF…VQASYFETLR (128 aa). Mg(2+) is bound by residues Gly-50 and Glu-66. Residues 51 to 72 carry the Nudix box motif; that stretch reads GGMEPEEEPGTAAVREVCEEAG. The active-site Proton acceptor is Glu-69. Glu-70 contributes to the Mg(2+) binding site. Residues 89-91, Arg-115, and Lys-133 contribute to the substrate site; that span reads RKH.

Belongs to the Nudix hydrolase family. DIPP subfamily. In terms of assembly, monomer. Mg(2+) is required as a cofactor. It depends on Mn(2+) as a cofactor. Requires Zn(2+) as cofactor.

The protein localises to the cytoplasm. It localises to the nucleus. It carries out the reaction diphospho-myo-inositol polyphosphate + H2O = myo-inositol polyphosphate + phosphate.. It catalyses the reaction 5-diphospho-1D-myo-inositol 1,2,3,4,6-pentakisphosphate + H2O = 1D-myo-inositol hexakisphosphate + phosphate + H(+). The catalysed reaction is 3,5-bis(diphospho)-1D-myo-inositol 1,2,4,6-tetrakisphosphate + H2O = 3-diphospho-1D-myo-inositol 1,2,4,5,6-pentakisphosphate + phosphate + 2 H(+). The enzyme catalyses [phosphate](n+1) + n H2O = (n+1) phosphate + n H(+). It carries out the reaction P(1),P(5)-bis(5'-adenosyl) pentaphosphate + H2O = ADP + ATP + 2 H(+). It catalyses the reaction P(1),P(6)-bis(5'-adenosyl) hexaphosphate + H2O = 2 ATP + 2 H(+). The catalysed reaction is P(1),P(4)-bis(5'-adenosyl) tetraphosphate + H2O = AMP + ATP + 2 H(+). The enzyme catalyses a 5'-end (N(7)-methyl 5'-triphosphoguanosine)-ribonucleoside in mRNA + H2O = N(7)-methyl-GMP + a 5'-end diphospho-ribonucleoside in mRNA + 2 H(+). It carries out the reaction a 5'-end (N(7)-methyl 5'-triphosphoguanosine)-ribonucleoside in mRNA + H2O = N(7)-methyl-GDP + a 5'-end phospho-ribonucleoside in mRNA + 2 H(+). Cleaves a beta-phosphate from the diphosphate groups in PP-InsP5 (diphosphoinositol pentakisphosphate) and [PP]2-InsP4 (bisdiphosphoinositol tetrakisphosphate), suggesting that it may play a role in signal transduction. InsP6 (inositol hexakisphosphate) is not a substrate. Also able to catalyze the hydrolysis of dinucleoside oligophosphates, with diadenosine 5',5'''-P1,P6-hexaphosphate (Ap6A) and diadenosine 5',5'''- P1,P5-pentaphosphate (Ap5A) being the preferred substrates. The major reaction products are ADP and p4a from Ap6A and ADP and ATP from Ap5A. Also able to hydrolyze 5- phosphoribose 1-diphosphate. Acts as a decapping enzyme that can hydrolyze both monomethylated and unmethylated capped RNAs. Hydrolyzes monomethylated capped RNA after both the alpha- and beta-phosphates generating m7GMP + ppRNA and m7GDP + pRNA. Modulates the stability of a subset of mRNAs implicated in cell motility. Divalent cations zinc, magnesium and manganese determine its substrate specificity. Exhibits diphosphoinositol polyphosphate phosphohydrolase in the presence of magnesium ions, diadenosine hexaphosphate hydrolase activity in the presence of manganese ions and endopolyphosphatase activity in the presence of zinc ions. Plays an important role in limiting DNA damage and maintaining cell survival upon oxidative stress via its endopolyphosphatase activity. This chain is Diphosphoinositol polyphosphate phosphohydrolase 1, found in Bos taurus (Bovine).